The chain runs to 469 residues: 23S rRNA (uracil(1939)-C(5))-methyltransferase RlmD (469 aa).

Residues 11–69 enclose the TRAM domain; it reads PKTSNQRLTVTVDKLDMNGVGVARWQNKPIFIAGVLPDEIVDVKVIEQKSKYARAKLIS. The [4Fe-4S] cluster site is built by cysteine 82, cysteine 88, cysteine 91, and cysteine 178. Residues glutamine 300, phenylalanine 329, asparagine 334, glutamate 350, aspartate 377, and aspartate 399 each contribute to the S-adenosyl-L-methionine site. Cysteine 425 (nucleophile) is an active-site residue.

It belongs to the class I-like SAM-binding methyltransferase superfamily. RNA M5U methyltransferase family. RlmD subfamily.

The catalysed reaction is uridine(1939) in 23S rRNA + S-adenosyl-L-methionine = 5-methyluridine(1939) in 23S rRNA + S-adenosyl-L-homocysteine + H(+). Its function is as follows. Catalyzes the formation of 5-methyl-uridine at position 1939 (m5U1939) in 23S rRNA. The sequence is that of 23S rRNA (uracil(1939)-C(5))-methyltransferase RlmD from Colwellia psychrerythraea (strain 34H / ATCC BAA-681) (Vibrio psychroerythus).